A 445-amino-acid polypeptide reads, in one-letter code: Phosphoglucosamine mutase (445 aa).

S102 serves as the catalytic Phosphoserine intermediate. Mg(2+) is bound by residues S102, D241, D243, and D245. Phosphoserine is present on S102.

The protein belongs to the phosphohexose mutase family. Mg(2+) is required as a cofactor. Post-translationally, activated by phosphorylation.

It carries out the reaction alpha-D-glucosamine 1-phosphate = D-glucosamine 6-phosphate. Functionally, catalyzes the conversion of glucosamine-6-phosphate to glucosamine-1-phosphate. In Shewanella piezotolerans (strain WP3 / JCM 13877), this protein is Phosphoglucosamine mutase.